A 646-amino-acid polypeptide reads, in one-letter code: Depudecin biosynthesis cluster-specific transcription activator DEP6 (646 aa).

Residues 16–43 (CEICRERKVRCDRALPKCRRCDRLNQPC) constitute a DNA-binding region (zn(2)-C6 fungal-type). Disordered stretches follow at residues 76–130 (TTAA…SQSQ) and 345–366 (KSEH…LALP). Over residues 349 to 360 (SQGMQNRETQSG) the composition is skewed to polar residues.

The protein resides in the nucleus. Functionally, transcription factor that positively regulates the expression of the gene cluster that mediates the biosynthesis of depudecin, a highly oxidized eleven-carbon linear polyketide that acts as a histone deacetylase (HDAC) inhibitor and makes a small contribution to pathogenesis. This chain is Depudecin biosynthesis cluster-specific transcription activator DEP6, found in Alternaria brassicicola (Dark leaf spot agent).